The following is a 296-amino-acid chain: Release factor glutamine methyltransferase (296 aa).

Residues 133–137 (GTGSG), aspartate 156, and asparagine 201 contribute to the S-adenosyl-L-methionine site. Residue 201–204 (NPPY) coordinates substrate.

Belongs to the protein N5-glutamine methyltransferase family. PrmC subfamily.

It catalyses the reaction L-glutaminyl-[peptide chain release factor] + S-adenosyl-L-methionine = N(5)-methyl-L-glutaminyl-[peptide chain release factor] + S-adenosyl-L-homocysteine + H(+). Functionally, methylates the class 1 translation termination release factors RF1/PrfA and RF2/PrfB on the glutamine residue of the universally conserved GGQ motif. The sequence is that of Release factor glutamine methyltransferase from Rhodopirellula baltica (strain DSM 10527 / NCIMB 13988 / SH1).